The primary structure comprises 120 residues: uncharacterized protein (120 aa).

The protein to M.jannaschii MJ1503.

This is an uncharacterized protein from Methanocaldococcus jannaschii (strain ATCC 43067 / DSM 2661 / JAL-1 / JCM 10045 / NBRC 100440) (Methanococcus jannaschii).